The following is a 480-amino-acid chain: Cytochrome c oxidase subunit 1 (480 aa).

The chain crosses the membrane as a helical span at residues isoleucine 22 to isoleucine 42. Ca(2+) is bound by residues glutamate 45 and glycine 50. Transmembrane regions (helical) follow at residues leucine 64 to glycine 84, serine 109 to glycine 129, leucine 151 to isoleucine 171, isoleucine 194 to methionine 214, leucine 240 to isoleucine 260, methionine 278 to tyrosine 298, tyrosine 309 to valine 329, and leucine 343 to valine 363. Residue histidine 69 participates in Fe(II)-heme a binding. Cu cation is bound at residue histidine 246. A cross-link (1'-histidyl-3'-tyrosine (His-Tyr)) is located at residues histidine 246–tyrosine 250. Tyrosine 250 contacts O2. Positions 295 and 296 each coordinate Cu cation. 2 residues coordinate Mg(2+): histidine 374 and aspartate 375. Histidine 382 contributes to the heme a3 binding site. 2 helical membrane passes run histidine 382 to isoleucine 402 and leucine 416 to phenylalanine 436. Residue histidine 384 participates in Fe(II)-heme a binding. Ca(2+) is bound at residue proline 447. A helical membrane pass occupies residues phenylalanine 458–isoleucine 478.

It belongs to the heme-copper respiratory oxidase family. In terms of assembly, component of the cytochrome c oxidase (complex IV, CIV), a multisubunit enzyme composed of a catalytic core of 3 subunits and several supernumerary subunits. The complex exists as a monomer or a dimer and forms supercomplexes (SCs) in the inner mitochondrial membrane with ubiquinol-cytochrome c oxidoreductase (cytochrome b-c1 complex, complex III, CIII). The cofactor is heme. Cu cation serves as cofactor.

It localises to the mitochondrion inner membrane. It carries out the reaction 4 Fe(II)-[cytochrome c] + O2 + 8 H(+)(in) = 4 Fe(III)-[cytochrome c] + 2 H2O + 4 H(+)(out). Its pathway is energy metabolism; oxidative phosphorylation. In terms of biological role, component of the cytochrome c oxidase, the last enzyme in the mitochondrial electron transport chain which drives oxidative phosphorylation. The respiratory chain contains 3 multisubunit complexes succinate dehydrogenase (complex II, CII), ubiquinol-cytochrome c oxidoreductase (cytochrome b-c1 complex, complex III, CIII) and cytochrome c oxidase (complex IV, CIV), that cooperate to transfer electrons derived from NADH and succinate to molecular oxygen, creating an electrochemical gradient over the inner membrane that drives transmembrane transport and the ATP synthase. Cytochrome c oxidase is the component of the respiratory chain that catalyzes the reduction of oxygen to water. Electrons originating from reduced cytochrome c in the intermembrane space (IMS) are transferred via the dinuclear copper A center (CU(A)) of subunit 2 and heme A of subunit 1 to the active site in subunit 1, a binuclear center (BNC) formed by heme A3 and copper B (CU(B)). The BNC reduces molecular oxygen to 2 water molecules using 4 electrons from cytochrome c in the IMS and 4 protons from the mitochondrial matrix. This is Cytochrome c oxidase subunit 1 (MT-CO1) from Theileria annulata.